The sequence spans 50 residues: Light-harvesting protein B-880 alpha chain (50 aa).

Topologically, residues 1 to 12 (MYKLWLLFDPRR) are cytoplasmic. The helical transmembrane segment at 13–33 (ALVALSAFLFVLALIIHFIAL) threads the bilayer. H29 lines the a bacteriochlorophyll pocket. Residues 34–50 (STDRFNWLEGKPAVKAA) lie on the Periplasmic side of the membrane.

It belongs to the antenna complex alpha subunit family. As to quaternary structure, the core complex is formed by different alpha and beta chains, binding bacteriochlorophyll molecules, and arranged most probably in tetrameric structures disposed around the reaction center. The non-pigmented gamma chains may constitute additional components.

It is found in the cell inner membrane. Functionally, antenna complexes are light-harvesting systems, which transfer the excitation energy to the reaction centers. The protein is Light-harvesting protein B-880 alpha chain of Rhodoblastus acidophilus (Rhodopseudomonas acidophila).